A 621-amino-acid chain; its full sequence is Cryptochrome-1 (621 aa).

A Photolyase/cryptochrome alpha/beta domain is found at 3–132 (VNAVHWFRKG…EVIVRISHTL (130 aa)). Short sequence motifs (LIR) lie at residues 50–54 (NRWRF), 82–87 (DVFPRL), and 151–156 (KRFQTL). FAD is bound at residue S252. Short sequence motifs (LIR) lie at residues 255 to 260 (LRFGCL), 271 to 276 (DLYKKV), 285 to 290 (SLYGQL), and 335 to 339 (TGFPW). Q289 provides a ligand contact to FAD. An FAD-binding site is contributed by H355. The LIR 8 signature appears at 379-384 (KVFEEL). Residue 387–389 (DAD) participates in FAD binding. 5 short sequence motifs (LIR) span residues 395-400 (GSWMWL), 411-416 (HCYCPV), 430-435 (RRYLPV), 486-491 (QIYQQL), and 492-497 (SRYRGL). Residues 581 to 621 (QSHLMQPGRASLGTGISAGKRPNPEEETQSVGPKVQRQSTN) are disordered.

Belongs to the DNA photolyase class-1 family. Component of the circadian core oscillator, which includes the CRY proteins, CLOCK or NPAS2, BMAL1 or BMAL2, CSNK1E, and the PER proteins. It depends on FAD as a cofactor. The cofactor is (6R)-5,10-methylene-5,6,7,8-tetrahydrofolate. Expressed in the pineal gland.

It localises to the cytoplasm. The protein localises to the nucleus. Transcriptional repressor which forms a core component of the circadian clock. The circadian clock, an internal time-keeping system, regulates various physiological processes through the generation of approximately 24 hour circadian rhythms in gene expression, which are translated into rhythms in metabolism and behavior. It is derived from the Latin roots 'circa' (about) and 'diem' (day) and acts as an important regulator of a wide array of physiological functions including metabolism, sleep, body temperature, blood pressure, endocrine, immune, cardiovascular, and renal function. Consists of two major components: the central clock, residing in the suprachiasmatic nucleus (SCN) of the brain, and the peripheral clocks that are present in nearly every tissue and organ system. Both the central and peripheral clocks can be reset by environmental cues, also known as Zeitgebers (German for 'timegivers'). The predominant Zeitgeber for the central clock is light, which is sensed by retina and signals directly to the SCN. The central clock entrains the peripheral clocks through neuronal and hormonal signals, body temperature and feeding-related cues, aligning all clocks with the external light/dark cycle. Circadian rhythms allow an organism to achieve temporal homeostasis with its environment at the molecular level by regulating gene expression to create a peak of protein expression once every 24 hours to control when a particular physiological process is most active with respect to the solar day. Transcription and translation of core clock components (CLOCK, NPAS2, BMAL1, BMAL2, PER1, PER2, PER3, CRY1 and CRY2) plays a critical role in rhythm generation, whereas delays imposed by post-translational modifications (PTMs) are important for determining the period (tau) of the rhythms (tau refers to the period of a rhythm and is the length, in time, of one complete cycle). A diurnal rhythm is synchronized with the day/night cycle, while the ultradian and infradian rhythms have a period shorter and longer than 24 hours, respectively. Disruptions in the circadian rhythms contribute to the pathology of cardiovascular diseases, cancer, metabolic syndromes and aging. A transcription/translation feedback loop (TTFL) forms the core of the molecular circadian clock mechanism. Transcription factors, CLOCK or NPAS2 and BMAL1 or BMAL2, form the positive limb of the feedback loop, act in the form of a heterodimer and activate the transcription of core clock genes and clock-controlled genes (involved in key metabolic processes), harboring E-box elements (5'-CACGTG-3') within their promoters. The core clock genes: PER1/2/3 and CRY1/2 which are transcriptional repressors form the negative limb of the feedback loop and interact with the CLOCK|NPAS2-BMAL1|BMAL2 heterodimer inhibiting its activity and thereby negatively regulating their own expression. This heterodimer also activates nuclear receptors NR1D1/2 and RORA/B/G, which form a second feedback loop and which activate and repress BMAL1 transcription, respectively. CRY1 and CRY2 have redundant functions but also differential and selective contributions at least in defining the pace of the SCN circadian clock and its circadian transcriptional outputs. More potent transcriptional repressor in cerebellum and liver than CRY2, though more effective in lengthening the period of the SCN oscillator. On its side, CRY2 seems to play a critical role in tuning SCN circadian period by opposing the action of CRY1. With CRY2, is dispensable for circadian rhythm generation but necessary for the development of intercellular networks for rhythm synchrony. Capable of translocating circadian clock core proteins such as PER proteins to the nucleus. Interacts with CLOCK-BMAL1 independently of PER proteins and is found at CLOCK-BMAL1-bound sites, suggesting that CRY may act as a molecular gatekeeper to maintain CLOCK-BMAL1 in a poised and repressed state until the proper time for transcriptional activation. Represses CLOCK-BMAL1-mediated transcriptional activation. This Gallus gallus (Chicken) protein is Cryptochrome-1 (CRY1).